The sequence spans 249 residues: Methyl-coenzyme M reductase subunit gamma (249 aa).

The disordered stretch occupies residues Arg-43–Pro-62. Arg-120 contributes to the coenzyme M binding site.

The protein belongs to the methyl-coenzyme M reductase gamma subunit family. As to quaternary structure, MCR is a hexamer of two alpha, two beta, and two gamma chains, forming a dimer of heterotrimers. Coenzyme F430 is required as a cofactor.

The protein resides in the cytoplasm. The catalysed reaction is coenzyme B + methyl-coenzyme M = methane + coenzyme M-coenzyme B heterodisulfide. Its pathway is one-carbon metabolism; methyl-coenzyme M reduction; methane from methyl-coenzyme M: step 1/1. In terms of biological role, component of the methyl-coenzyme M reductase (MCR) I that catalyzes the reductive cleavage of methyl-coenzyme M (CoM-S-CH3 or 2-(methylthio)ethanesulfonate) using coenzyme B (CoB or 7-mercaptoheptanoylthreonine phosphate) as reductant which results in the production of methane and the mixed heterodisulfide of CoB and CoM (CoM-S-S-CoB). This is the final step in methanogenesis. The protein is Methyl-coenzyme M reductase subunit gamma (mcrG) of Methanothermus fervidus.